Consider the following 935-residue polypeptide: Bifunctional alpha-galactosidase/sucrose kinase AgaSK (935 aa).

Residues 1–720 (MAIIYNPNKK…EAYQFAFTEL (720 aa)) are alpha-galactosidase. Residues glutamate 176, glutamate 277, and phenylalanine 280 each coordinate Mg(2+). Substrate contacts are provided by residues 366 to 367 (DD), arginine 443, 476 to 480 (KWDMN), and 518 to 521 (CSGG). Aspartate 526 acts as the Nucleophile in catalysis. Aspartate 540 contributes to the substrate binding site. Glutamate 606 (proton donor/acceptor) is an active-site residue. Residues 721–935 (KEAGRLYEKV…VGKDGSVYEQ (215 aa)) are sucrose kinase. ATP-binding positions include 748–752 (GGSGS) and alanine 824.

This sequence in the N-terminal section; belongs to the glycosyl hydrolase 36 family. The protein in the C-terminal section; belongs to the uridine kinase family. Homotetramer. Mg(2+) serves as cofactor.

It catalyses the reaction Hydrolysis of terminal, non-reducing alpha-D-galactose residues in alpha-D-galactosides, including galactose oligosaccharides, galactomannans and galactolipids.. Bifunctional enzyme with alpha-galactosidase and sucrose kinase activities. Produces sucrose-6-phosphate directly from raffinose. Binds ATP. Phosphorylates sucrose specifically on the C6 position of glucose in the presence of ATP. Hydrolyzes melibiose, raffinose, stachyose and synthetic substrate p-nitrophenyl-alpha-D-galactopyranoside with high activity. Low activity against locust bean gum, guar gum and synthetic substrates xylose alpha-D-4-nitrophenol, glucose alpha-D-4-nitrophenol and o-nitrophenyl-alpha-D-galactopyranoside. In Mediterraneibacter gnavus (Ruminococcus gnavus), this protein is Bifunctional alpha-galactosidase/sucrose kinase AgaSK.